A 215-amino-acid polypeptide reads, in one-letter code: A-type ATP synthase subunit E (215 aa).

This sequence belongs to the V-ATPase E subunit family. Has multiple subunits with at least A(3), B(3), C, D, E, F, H, I and proteolipid K(x).

It localises to the cell membrane. Its function is as follows. Component of the A-type ATP synthase that produces ATP from ADP in the presence of a proton gradient across the membrane. The sequence is that of A-type ATP synthase subunit E from Thermofilum pendens (strain DSM 2475 / Hrk 5).